A 313-amino-acid chain; its full sequence is 3'-5' exoribonuclease YhaM (313 aa).

Residues serine 22 to alanine 90 constitute a DNA-binding region (OB). The HD domain maps to histidine 163–serine 279.

This sequence belongs to the YhaM family.

Functionally, shows a 3'-5' exoribonuclease activity. This Listeria innocua serovar 6a (strain ATCC BAA-680 / CLIP 11262) protein is 3'-5' exoribonuclease YhaM.